A 233-amino-acid polypeptide reads, in one-letter code: Octanoyltransferase (233 aa).

The BPL/LPL catalytic domain maps to glycine 34 to isoleucine 214. Residues arginine 72–histidine 79, alanine 144–glycine 146, and glycine 157–serine 159 each bind substrate. Cysteine 175 serves as the catalytic Acyl-thioester intermediate.

This sequence belongs to the LipB family.

The protein resides in the cytoplasm. It catalyses the reaction octanoyl-[ACP] + L-lysyl-[protein] = N(6)-octanoyl-L-lysyl-[protein] + holo-[ACP] + H(+). It participates in protein modification; protein lipoylation via endogenous pathway; protein N(6)-(lipoyl)lysine from octanoyl-[acyl-carrier-protein]: step 1/2. In terms of biological role, catalyzes the transfer of endogenously produced octanoic acid from octanoyl-acyl-carrier-protein onto the lipoyl domains of lipoate-dependent enzymes. Lipoyl-ACP can also act as a substrate although octanoyl-ACP is likely to be the physiological substrate. This chain is Octanoyltransferase, found in Renibacterium salmoninarum (strain ATCC 33209 / DSM 20767 / JCM 11484 / NBRC 15589 / NCIMB 2235).